A 251-amino-acid chain; its full sequence is MTQVLRSPSEFQAWRRKQSGTVGFVPTMGALHTGHEELIKQARKNNDLVVLSIFVNPTQFNDPKDLEKYPQTWDQDLAMAERNNVDAIFFPRYPDMYPDNYRYKVSENEYSTLLDGAHRPGHFDGVLSVVMKLFNVVRPTKAYFGEKDFQQLTLIQGMVESFFMDLEIVPVPTVREEDGLAKSSRNLRLTPEERKKAPAIFKAITNSKTAAEAAASLSAQGFIVDYVTDVGNRRFVAAKLGEVRLIDNVQI.

28–35 (MGALHTGH) contributes to the ATP binding site. His-35 serves as the catalytic Proton donor. Position 59 (Gln-59) interacts with (R)-pantoate. A beta-alanine-binding site is contributed by Gln-59. Residue 145–148 (GEKD) coordinates ATP. Gln-151 contributes to the (R)-pantoate binding site. Residues Val-174 and 182-185 (KSSR) contribute to the ATP site.

The protein belongs to the pantothenate synthetase family. Homodimer.

It localises to the cytoplasm. It catalyses the reaction (R)-pantoate + beta-alanine + ATP = (R)-pantothenate + AMP + diphosphate + H(+). It functions in the pathway cofactor biosynthesis; (R)-pantothenate biosynthesis; (R)-pantothenate from (R)-pantoate and beta-alanine: step 1/1. In terms of biological role, catalyzes the condensation of pantoate with beta-alanine in an ATP-dependent reaction via a pantoyl-adenylate intermediate. This is Pantothenate synthetase from Bdellovibrio bacteriovorus (strain ATCC 15356 / DSM 50701 / NCIMB 9529 / HD100).